Consider the following 267-residue polypeptide: Thymidylate synthase (267 aa).

Arginine 24 contributes to the dUMP binding site. (6R)-5,10-methylene-5,6,7,8-tetrahydrofolate is bound at residue histidine 54. 129-130 (RR) provides a ligand contact to dUMP. Cysteine 149 acts as the Nucleophile in catalysis. DUMP contacts are provided by residues 169-172 (RSAD), asparagine 180, and 210-212 (HIY). Residue aspartate 172 participates in (6R)-5,10-methylene-5,6,7,8-tetrahydrofolate binding. Alanine 266 contributes to the (6R)-5,10-methylene-5,6,7,8-tetrahydrofolate binding site.

This sequence belongs to the thymidylate synthase family. Bacterial-type ThyA subfamily. Homodimer.

The protein resides in the cytoplasm. It carries out the reaction dUMP + (6R)-5,10-methylene-5,6,7,8-tetrahydrofolate = 7,8-dihydrofolate + dTMP. It participates in pyrimidine metabolism; dTTP biosynthesis. In terms of biological role, catalyzes the reductive methylation of 2'-deoxyuridine-5'-monophosphate (dUMP) to 2'-deoxythymidine-5'-monophosphate (dTMP) while utilizing 5,10-methylenetetrahydrofolate (mTHF) as the methyl donor and reductant in the reaction, yielding dihydrofolate (DHF) as a by-product. This enzymatic reaction provides an intracellular de novo source of dTMP, an essential precursor for DNA biosynthesis. The polypeptide is Thymidylate synthase (Arthrobacter sp. (strain FB24)).